The following is a 337-amino-acid chain: Glycine N(alpha)-acyltransferase (337 aa).

Belongs to the acetyltransferase family.

It carries out the reaction a (3R)-hydroxyacyl-[ACP] + glycine = a lyso-glycine lipid + holo-[ACP] + H(+). It catalyses the reaction (3R)-hydroxyhexadecanoyl-[ACP] + glycine = N-[(3R)-3-hydroxyhexadecanoyl]-glycine + holo-[ACP] + H(+). It participates in lipid metabolism. In terms of biological role, is involved in the production of glycine lipids (GL), which are phosphorus-free membrane lipids important for fitness during growth of the human gut bacterium B.thetaiotaomicron in vivo and in vitro. Catalyzes the first step of GL biosynthesis, i.e. the N-acylation of glycine via addition of a 3-hydroxy fatty acyl group, to form a range of monoacylated glycine (also named lyso-glycine lipids or lyso-GL). Is important for the ability of B.thetaiotaomicron to adapt to stress and colonize the mammalian gut. Also seems to be required for the production of flavolipin, an acylated serine-glycine dipeptide. The sequence is that of Glycine N(alpha)-acyltransferase from Bacteroides thetaiotaomicron (strain ATCC 29148 / DSM 2079 / JCM 5827 / CCUG 10774 / NCTC 10582 / VPI-5482 / E50).